The primary structure comprises 129 residues: Mitochondrial pyruvate carrier 2 (129 aa).

Residues 2–22 (STSSVRFAFRRFWQSETGPKT) lie on the Mitochondrial matrix side of the membrane. The helical transmembrane segment at 23–39 (VHFWAPTLKWGLVFAGF) threads the bilayer. Over 40 to 54 (SDMKRPVEKISGAQN) the chain is Mitochondrial intermembrane. A helical membrane pass occupies residues 55 to 71 (LSLLSTALIWTRWSFVI). Over 72–74 (KPR) the chain is Mitochondrial matrix. A helical transmembrane segment spans residues 75-91 (NILLASVNSFLCLTAGY). Residues 92-129 (QLGRIANYRIRNGDSISQLCSYILSGADESKKEITTGR) are Mitochondrial intermembrane-facing.

This sequence belongs to the mitochondrial pyruvate carrier (MPC) (TC 2.A.105) family. In terms of assembly, the functional 150 kDa pyruvate import complex is a heteromer of MPC1 and either MPC2 or MPC3.

The protein localises to the mitochondrion. It is found in the mitochondrion inner membrane. It carries out the reaction pyruvate(out) + H(+)(out) = pyruvate(in) + H(+)(in). Functionally, mediates the uptake of pyruvate into mitochondria. The sequence is that of Mitochondrial pyruvate carrier 2 from Saccharomyces cerevisiae (strain ATCC 204508 / S288c) (Baker's yeast).